The sequence spans 447 residues: MTAHEVNFDGLVGLTHHYAGLSFGNEASTRHRFQMSNPRLAVKQGLLKMKALADAGFPQAVIPPHERPFIPALRQLGFTGSDEQILDKVARQAPRWLSSVSSASPMWVANAATVCPSADALDGKVHLTVANLNNKFHRALEAPVTEALLRAIFRDESQFSVHSALPQVALLGDEGAANHNRLGGEYGSAGVQLFVYGREEENEIRPARYPARQSREASEAVARLNQVNPQQVIFAQQNPEVIDQGVFHNDVIAVSNRQVLFCHEAAFARQKVLINQLRTRVDGFMAIEVPAGEVSVSDAVATYLFNSQLLSRDDGSMLLVLPRECQDHVGVWRYLNKLVAEDNPISAMQVFDLRESMANGGGPACLRLRVVLTEEERRAVNPAVMMNDALFTALNAWADRYYRDRLTAADLADPLLLREGREALDVLTRLLDLGSVYPFQQTGAADG.

Substrate is bound by residues 19 to 28 (AGLSFGNEAS), asparagine 110, and 137 to 138 (HR). The active site involves glutamate 174. Arginine 212 is a binding site for substrate. Residue histidine 248 is part of the active site. Substrate contacts are provided by aspartate 250 and asparagine 359. Cysteine 365 serves as the catalytic Nucleophile.

The protein belongs to the succinylarginine dihydrolase family. As to quaternary structure, homodimer.

The enzyme catalyses N(2)-succinyl-L-arginine + 2 H2O + 2 H(+) = N(2)-succinyl-L-ornithine + 2 NH4(+) + CO2. It participates in amino-acid degradation; L-arginine degradation via AST pathway; L-glutamate and succinate from L-arginine: step 2/5. Functionally, catalyzes the hydrolysis of N(2)-succinylarginine into N(2)-succinylornithine, ammonia and CO(2). The chain is N-succinylarginine dihydrolase from Salmonella dublin (strain CT_02021853).